Reading from the N-terminus, the 500-residue chain is Beta-glucosidase 2 (500 aa).

A signal peptide spans 1-24; sequence MGAAAAAGFFFVLLFLSVQGGAVG. A beta-D-glucoside-binding residues include glutamine 44 and histidine 144. The active-site Proton donor is the glutamate 190. The cysteines at positions 209 and 218 are disulfide-linked. Residue asparagine 222 is glycosylated (N-linked (GlcNAc...) asparagine). Positions 334 and 403 each coordinate a beta-D-glucoside. The active-site Nucleophile is the glutamate 403. An N-linked (GlcNAc...) asparagine glycan is attached at asparagine 410. Tryptophan 445 lines the a beta-D-glucoside pocket.

It belongs to the glycosyl hydrolase 1 family.

The catalysed reaction is Hydrolysis of terminal, non-reducing beta-D-glucosyl residues with release of beta-D-glucose.. In Oryza sativa subsp. japonica (Rice), this protein is Beta-glucosidase 2 (BGLU2).